The following is a 226-amino-acid chain: Ribonuclease 3 (226 aa).

Residues 6–128 (FNKLQKKMGY…IIGGIFLDSN (123 aa)) form the RNase III domain. A Mg(2+)-binding site is contributed by Glu41. Asp45 is a catalytic residue. Mg(2+) contacts are provided by Asn114 and Glu117. The active site involves Glu117. Residues 155–225 (DPKTRLQEYL…AKQALLLFNI (71 aa)) form the DRBM domain.

Belongs to the ribonuclease III family. In terms of assembly, homodimer. It depends on Mg(2+) as a cofactor.

The protein localises to the cytoplasm. It catalyses the reaction Endonucleolytic cleavage to 5'-phosphomonoester.. Digests double-stranded RNA. Involved in the processing of primary rRNA transcript to yield the immediate precursors to the large and small rRNAs (23S and 16S). Processes some mRNAs, and tRNAs when they are encoded in the rRNA operon. Processes pre-crRNA and tracrRNA of type II CRISPR loci if present in the organism. The sequence is that of Ribonuclease 3 from Wigglesworthia glossinidia brevipalpis.